Consider the following 189-residue polypeptide: Glycerol-3-phosphate acyltransferase (189 aa).

A run of 5 helical transmembrane segments spans residues 1–21 (MFWL…AILL), 51–71 (LAVL…LIAH), 77–97 (LQQQ…PLYF), 111–131 (MLLG…ALTF), and 151–171 (LLAW…LLIV).

This sequence belongs to the PlsY family. In terms of assembly, probably interacts with PlsX.

The protein localises to the cell inner membrane. It catalyses the reaction an acyl phosphate + sn-glycerol 3-phosphate = a 1-acyl-sn-glycero-3-phosphate + phosphate. Its pathway is lipid metabolism; phospholipid metabolism. Functionally, catalyzes the transfer of an acyl group from acyl-phosphate (acyl-PO(4)) to glycerol-3-phosphate (G3P) to form lysophosphatidic acid (LPA). This enzyme utilizes acyl-phosphate as fatty acyl donor, but not acyl-CoA or acyl-ACP. The polypeptide is Glycerol-3-phosphate acyltransferase (Pseudomonas fluorescens (strain ATCC BAA-477 / NRRL B-23932 / Pf-5)).